The sequence spans 391 residues: Phosphoglycerate kinase (391 aa).

Substrate is bound by residues 21 to 23, R36, 59 to 62, R113, and R146; these read DLN and HLGR. Residues K197, E319, and 345–348 contribute to the ATP site; that span reads GGDT.

It belongs to the phosphoglycerate kinase family. As to quaternary structure, monomer.

The protein resides in the cytoplasm. The catalysed reaction is (2R)-3-phosphoglycerate + ATP = (2R)-3-phospho-glyceroyl phosphate + ADP. It functions in the pathway carbohydrate degradation; glycolysis; pyruvate from D-glyceraldehyde 3-phosphate: step 2/5. The polypeptide is Phosphoglycerate kinase (Shewanella sp. (strain ANA-3)).